Here is a 235-residue protein sequence, read N- to C-terminus: Phosphoribosylaminoimidazole-succinocarboxamide synthase (235 aa).

This sequence belongs to the SAICAR synthetase family.

It carries out the reaction 5-amino-1-(5-phospho-D-ribosyl)imidazole-4-carboxylate + L-aspartate + ATP = (2S)-2-[5-amino-1-(5-phospho-beta-D-ribosyl)imidazole-4-carboxamido]succinate + ADP + phosphate + 2 H(+). The protein operates within purine metabolism; IMP biosynthesis via de novo pathway; 5-amino-1-(5-phospho-D-ribosyl)imidazole-4-carboxamide from 5-amino-1-(5-phospho-D-ribosyl)imidazole-4-carboxylate: step 1/2. This Streptococcus thermophilus (strain CNRZ 1066) protein is Phosphoribosylaminoimidazole-succinocarboxamide synthase.